The sequence spans 82 residues: Cyclin-dependent protein kinase inhibitor SMR5 (82 aa).

The interval 1–26 (MEEKNYDDGDTVTVDDDYQMGCTTPT) is disordered. Acidic residues predominate over residues 8–18 (DGDTVTVDDDY).

As to quaternary structure, interacts with CDKA-1 and D-type cyclins. In terms of tissue distribution, expressed in columella cells in the roots and in root meristems after induction.

Probable cyclin-dependent protein kinase (CDK) inhibitor that functions as a repressor of mitosis in the endoreduplication cell cycle. Acts as a potent cell cycle inhibitor, regulating a hydroxyurea-dependent checkpoint in leaves. Essential to activate a high-light-dependent cell cycle checkpoint. The polypeptide is Cyclin-dependent protein kinase inhibitor SMR5 (Arabidopsis thaliana (Mouse-ear cress)).